Reading from the N-terminus, the 354-residue chain is Uroporphyrinogen decarboxylase (354 aa).

Substrate contacts are provided by residues 27–31 (RQAGR), Asp-77, Tyr-154, Thr-209, and His-327.

This sequence belongs to the uroporphyrinogen decarboxylase family. Homodimer.

Its subcellular location is the cytoplasm. It carries out the reaction uroporphyrinogen III + 4 H(+) = coproporphyrinogen III + 4 CO2. It functions in the pathway porphyrin-containing compound metabolism; protoporphyrin-IX biosynthesis; coproporphyrinogen-III from 5-aminolevulinate: step 4/4. In terms of biological role, catalyzes the decarboxylation of four acetate groups of uroporphyrinogen-III to yield coproporphyrinogen-III. This is Uroporphyrinogen decarboxylase from Escherichia coli O6:K15:H31 (strain 536 / UPEC).